The chain runs to 498 residues: Aminotransferase swnA (498 aa).

It belongs to the class-I pyridoxal-phosphate-dependent aminotransferase family. The cofactor is pyridoxal 5'-phosphate.

It participates in mycotoxin biosynthesis. In terms of biological role, aminotransferase; part of the gene cluster that mediates the biosynthesis of swainsonine (SW), a cytotoxic fungal alkaloid and a potential cancer therapy drug. Swainsonine production occurs via a multibranched pathway and is dispensable for fungal colonization of plants and infection of insect hosts. The first step of swainsonine biosynthesis is the production of the precursor pipecolic acid (PA) via conversion of L-lysine (Lys) to 1-piperideine-6-carboxylate (P6C) by the aminotransferase swnA, the latter being further reduced to PA by the reductase swnR. PA can be converted from lysine by both the SW biosynthetic cluster and the unclustered genes such as lysine cyclodeaminase. The PKS-NRPS hybrid synthetase swnK uptakes and condensates PA and malonyl-CoA with and without skipping of the ketoreductase (KR) domain in order to produce 3 intermediates, 1-oxoindolizidine, (1S)-1-hydroxyindolizin, and (1R)-1-hydroxyindolizine; with the transisomer (1S)-1-hydroxyindolizin being predominant. The terminal thioester reductase (TE) domain of swnK is involved in reduction of the thioester bond to release the intermediate aldehydes. The oxidoreductase swnN could contribute to the reduction of 1-oxoindolizidine to (1S)-1-hydroxyindolizin and (1R)-1-hydroxyindolizine, contributing to the major route of SW production. The dioxygenase swnH2 would be responsible for the oxidization of (1R)-1-hydroxyindolizine into (1R,2S)-1,2-dihydroxyindolizine and of (1S)-1-hydroxyindolizin to yield both (1R,2S)-1,2-dihydroxyindolizine and (1S,2S)-1,2-dihydroxyindolizine. The dioxygenase swnH1 then performs the conversion of the 1,2-dihydroxyindolizine epimers to SW. This chain is Aminotransferase swnA, found in Metarhizium robertsii (strain ARSEF 23 / ATCC MYA-3075) (Metarhizium anisopliae (strain ARSEF 23)).